The following is a 691-amino-acid chain: Glycine--tRNA ligase beta subunit (691 aa).

It belongs to the class-II aminoacyl-tRNA synthetase family. In terms of assembly, tetramer of two alpha and two beta subunits.

The protein resides in the cytoplasm. It carries out the reaction tRNA(Gly) + glycine + ATP = glycyl-tRNA(Gly) + AMP + diphosphate. In Limosilactobacillus reuteri (strain DSM 20016) (Lactobacillus reuteri), this protein is Glycine--tRNA ligase beta subunit.